The sequence spans 170 residues: TFIIB-type zinc finger protein (170 aa).

The TFIIB-type zinc-finger motif lies at 1–30; the sequence is MECPVCGSNEIVWDNKNGEVVCSNCGIIID. Zn(2+)-binding residues include cysteine 3, cysteine 6, cysteine 22, and cysteine 25.

This sequence belongs to the TFIIB family. Requires Zn(2+) as cofactor.

This is TFIIB-type zinc finger protein from Saccharolobus shibatae (strain ATCC 51178 / DSM 5389 / JCM 8931 / NBRC 15437 / B12) (Sulfolobus shibatae).